A 292-amino-acid chain; its full sequence is ATP synthase gamma chain (292 aa).

It belongs to the ATPase gamma chain family. F-type ATPases have 2 components, CF(1) - the catalytic core - and CF(0) - the membrane proton channel. CF(1) has five subunits: alpha(3), beta(3), gamma(1), delta(1), epsilon(1). CF(0) has three main subunits: a, b and c.

It is found in the cell membrane. Functionally, produces ATP from ADP in the presence of a proton gradient across the membrane. The gamma chain is believed to be important in regulating ATPase activity and the flow of protons through the CF(0) complex. The protein is ATP synthase gamma chain of Streptococcus pneumoniae serotype 2 (strain D39 / NCTC 7466).